The primary structure comprises 234 residues: UDP-2,3-diacylglucosamine hydrolase (234 aa).

Mn(2+)-binding residues include Asp-9, His-11, Asp-42, Asn-80, and His-115. 80 to 81 (NR) contributes to the substrate binding site. Substrate-binding residues include Asp-123, Ser-161, Lys-165, Lys-168, and His-196. Residues His-196 and His-198 each coordinate Mn(2+).

It belongs to the LpxH family. Mn(2+) is required as a cofactor.

The protein resides in the cell inner membrane. The catalysed reaction is UDP-2-N,3-O-bis[(3R)-3-hydroxytetradecanoyl]-alpha-D-glucosamine + H2O = 2-N,3-O-bis[(3R)-3-hydroxytetradecanoyl]-alpha-D-glucosaminyl 1-phosphate + UMP + 2 H(+). It functions in the pathway glycolipid biosynthesis; lipid IV(A) biosynthesis; lipid IV(A) from (3R)-3-hydroxytetradecanoyl-[acyl-carrier-protein] and UDP-N-acetyl-alpha-D-glucosamine: step 4/6. In terms of biological role, hydrolyzes the pyrophosphate bond of UDP-2,3-diacylglucosamine to yield 2,3-diacylglucosamine 1-phosphate (lipid X) and UMP by catalyzing the attack of water at the alpha-P atom. Involved in the biosynthesis of lipid A, a phosphorylated glycolipid that anchors the lipopolysaccharide to the outer membrane of the cell. The sequence is that of UDP-2,3-diacylglucosamine hydrolase from Histophilus somni (strain 2336) (Haemophilus somnus).